A 205-amino-acid chain; its full sequence is Outer-membrane lipoprotein carrier protein (205 aa).

Positions 1–19 (MKKIIICFIFVFSINVSFA) are cleaved as a signal peptide.

This sequence belongs to the LolA family. Monomer.

The protein localises to the periplasm. In terms of biological role, participates in the translocation of lipoproteins from the inner membrane to the outer membrane. Only forms a complex with a lipoprotein if the residue after the N-terminal Cys is not an aspartate (The Asp acts as a targeting signal to indicate that the lipoprotein should stay in the inner membrane). The chain is Outer-membrane lipoprotein carrier protein from Francisella tularensis subsp. tularensis (strain FSC 198).